The sequence spans 697 residues: Histone deacetylase HOS3 (697 aa).

The segment at 40-440 (AKAVVVLSPY…LIGLQNQDWV (401 aa)) is histone deacetylase. His196 is an active-site residue. The interval 525–573 (IRSHRSNASPEKELHENKPRSTEKQEQREIRSDTKVKQLSSNNRAAETQ) is disordered. The span at 534–560 (PEKELHENKPRSTEKQEQREIRSDTKV) shows a compositional bias: basic and acidic residues. A compositionally biased stretch (polar residues) spans 561 to 573 (KQLSSNNRAAETQ). 4 positions are modified to phosphoserine: Ser582, Ser583, Ser613, and Ser629. Over residues 625-638 (GDEDSDHELKEKNW) the composition is skewed to basic and acidic residues. A disordered region spans residues 625 to 697 (GDEDSDHELK…KHTTRSGGRW (73 aa)). Residues 665 to 674 (QPQNANTPTY) show a composition bias toward polar residues.

It belongs to the histone deacetylase family. HD type 1 subfamily. Homodimer.

It is found in the nucleus. It carries out the reaction N(6)-acetyl-L-lysyl-[histone] + H2O = L-lysyl-[histone] + acetate. Functionally, responsible for the deacetylation of lysine residues on the N-terminal part of the core histones (H2A, H2B, H3 and H4). Histone deacetylation gives a tag for epigenetic repression and plays an important role in transcriptional regulation, cell cycle progression and developmental events. Histone deacetylases act via the formation of large multiprotein complexes. In Saccharomyces cerevisiae (strain ATCC 204508 / S288c) (Baker's yeast), this protein is Histone deacetylase HOS3 (HOS3).